The chain runs to 164 residues: MAVELKKVFSTILRFLALAATVVAVIVMIRSHDSAIVLNLTFSAKYNNTPAFKYFVIAEGIASVYTIIVIFLWSKGLLGRLIVILDMVTTVLLTSSISAALAIAQVGKKGNSHAGWLPVCGQVPKFCDQAIIALVAGFVAAIVYFMLLLCSLHAVLTPIFAVKP.

Topologically, residues 1-8 (MAVELKKV) are cytoplasmic. The chain crosses the membrane as a helical span at residues 9–29 (FSTILRFLALAATVVAVIVMI). Residues 30–53 (RSHDSAIVLNLTFSAKYNNTPAFK) are Extracellular-facing. Asparagine 39 carries N-linked (GlcNAc...) asparagine glycosylation. Residues 54–74 (YFVIAEGIASVYTIIVIFLWS) form a helical membrane-spanning segment. Residues 75–80 (KGLLGR) lie on the Cytoplasmic side of the membrane. Residues 81 to 101 (LIVILDMVTTVLLTSSISAAL) traverse the membrane as a helical segment. The Extracellular portion of the chain corresponds to 102 to 129 (AIAQVGKKGNSHAGWLPVCGQVPKFCDQ). The helical transmembrane segment at 130-150 (AIIALVAGFVAAIVYFMLLLC) threads the bilayer. The Cytoplasmic segment spans residues 151–164 (SLHAVLTPIFAVKP).

The protein belongs to the Casparian strip membrane proteins (CASP) family. In terms of assembly, homodimer and heterodimers.

The protein localises to the cell membrane. The polypeptide is CASP-like protein 1C2 (Ricinus communis (Castor bean)).